Here is a 187-residue protein sequence, read N- to C-terminus: UPF0301 protein YqgE (187 aa).

This sequence belongs to the UPF0301 (AlgH) family.

This chain is UPF0301 protein YqgE, found in Shigella boydii serotype 4 (strain Sb227).